The primary structure comprises 237 residues: UPF0173 metal-dependent hydrolase BOV_A0561 (237 aa).

Belongs to the UPF0173 family.

This Brucella ovis (strain ATCC 25840 / 63/290 / NCTC 10512) protein is UPF0173 metal-dependent hydrolase BOV_A0561.